The primary structure comprises 391 residues: Protein-glutamate methylesterase/protein-glutamine glutaminase (391 aa).

In terms of domain architecture, Response regulatory spans 4–121 (KVLVVDDSSF…ARNNEDAIKL (118 aa)). Asp55 carries the post-translational modification 4-aspartylphosphate. A CheB-type methylesterase domain is found at 197-391 (SGKHYQLVAI…IRLKTEVGCG (195 aa)). Catalysis depends on residues Ser209, His236, and Asp333.

The protein belongs to the CheB family. In terms of processing, phosphorylated by CheA. Phosphorylation of the N-terminal regulatory domain activates the methylesterase activity.

It is found in the cytoplasm. It carries out the reaction [protein]-L-glutamate 5-O-methyl ester + H2O = L-glutamyl-[protein] + methanol + H(+). It catalyses the reaction L-glutaminyl-[protein] + H2O = L-glutamyl-[protein] + NH4(+). Functionally, involved in chemotaxis. Part of a chemotaxis signal transduction system that modulates chemotaxis in response to various stimuli. Catalyzes the demethylation of specific methylglutamate residues introduced into the chemoreceptors (methyl-accepting chemotaxis proteins or MCP) by CheR. Also mediates the irreversible deamidation of specific glutamine residues to glutamic acid. The polypeptide is Protein-glutamate methylesterase/protein-glutamine glutaminase (Pseudoalteromonas translucida (strain TAC 125)).